A 523-amino-acid polypeptide reads, in one-letter code: NAD(P) transhydrogenase subunit alpha (523 aa).

The Cytoplasmic portion of the chain corresponds to 1 to 411 (MKIGAPREIF…AEIATFRKQT (411 aa)). NAD(+) is bound by residues 127–130 (QKMD), V177, 197–199 (DVR), and G229. The next 2 membrane-spanning stretches (helical) occupy residues 412–432 (VSQVAMLAVGTALLLFVGMYA) and 433–455 (PPSFMAHFIVFALACFVGFQVIW). The Cytoplasmic portion of the chain corresponds to 456–464 (NVSHSLHTP). Residues 465-485 (LMAVTNAISGIVILGALLQIG) form a helical membrane-spanning segment. Over 486–489 (SGNV) the chain is Periplasmic. A helical transmembrane segment spans residues 490 to 510 (LVVLLAAISVLIATINIVGGF). Over 511–523 (LVTRRMLAMFQKS) the chain is Cytoplasmic.

Belongs to the AlaDH/PNT family. As to quaternary structure, heterodimer of an alpha (PntA) and a beta (PntB) chain.

The protein localises to the cell inner membrane. The enzyme catalyses NAD(+) + NADPH + H(+)(in) = NADH + NADP(+) + H(+)(out). Functionally, the transhydrogenation between NADH and NADP is coupled to respiration and ATP hydrolysis and functions as a proton pump across the membrane. In Cereibacter sphaeroides (Rhodobacter sphaeroides), this protein is NAD(P) transhydrogenase subunit alpha.